We begin with the raw amino-acid sequence, 498 residues long: Pentatricopeptide repeat-containing protein At3g61360 (498 aa).

PPR repeat units lie at residues 102–132 (TSDS…VRKD), 138–172 (SFKS…IFRK), 175–205 (GVDE…LHSR), 209–243 (DVKT…GFKP), 244–278 (NSVT…DFDI), 279–313 (TVQI…GLTP), 314–348 (DCGA…GIEP), 349–385 (DSVT…SLVP), and 386–420 (KTPT…GYCP).

Belongs to the PPR family. P subfamily.

The protein is Pentatricopeptide repeat-containing protein At3g61360 of Arabidopsis thaliana (Mouse-ear cress).